The primary structure comprises 278 residues: Adenosylcobinamide-GDP ribazoletransferase (278 aa).

A run of 6 helical transmembrane segments spans residues 44–64 (GIGV…QLLL), 69–89 (FTPL…TGGF), 121–141 (AFGA…LALL), 161–181 (VCAA…VMIW), 204–224 (GGLA…SLAL), and 227–247 (INLI…LRFF).

It belongs to the CobS family. The cofactor is Mg(2+).

The protein resides in the cell inner membrane. The enzyme catalyses alpha-ribazole + adenosylcob(III)inamide-GDP = adenosylcob(III)alamin + GMP + H(+). It carries out the reaction alpha-ribazole 5'-phosphate + adenosylcob(III)inamide-GDP = adenosylcob(III)alamin 5'-phosphate + GMP + H(+). It participates in cofactor biosynthesis; adenosylcobalamin biosynthesis; adenosylcobalamin from cob(II)yrinate a,c-diamide: step 7/7. Functionally, joins adenosylcobinamide-GDP and alpha-ribazole to generate adenosylcobalamin (Ado-cobalamin). Also synthesizes adenosylcobalamin 5'-phosphate from adenosylcobinamide-GDP and alpha-ribazole 5'-phosphate. The sequence is that of Adenosylcobinamide-GDP ribazoletransferase from Polaromonas naphthalenivorans (strain CJ2).